We begin with the raw amino-acid sequence, 1014 residues long: Probable sucrose-phosphate synthase 5 (1014 aa).

Composition is skewed to basic and acidic residues over residues 29–41 (RRLEQELGSREAA) and 49–58 (EGEKDGKPDT). Disordered regions lie at residues 29–108 (RRLE…SDEE) and 648–677 (QLLRVPPSPSSSSAAAAAAGGGGAAASSEP).

It belongs to the glycosyltransferase 1 family. In terms of assembly, homodimer or homotetramer. Expressed in germinating seeds.

The catalysed reaction is beta-D-fructose 6-phosphate + UDP-alpha-D-glucose = sucrose 6(F)-phosphate + UDP + H(+). It participates in glycan biosynthesis; sucrose biosynthesis; sucrose from D-fructose 6-phosphate and UDP-alpha-D-glucose: step 1/2. Its activity is regulated as follows. Activity is regulated by phosphorylation and moderated by concentration of metabolites and light. In terms of biological role, plays a role in photosynthetic sucrose synthesis by catalyzing the rate-limiting step of sucrose biosynthesis from UDP-glucose and fructose- 6-phosphate. Involved in the regulation of carbon partitioning in the leaves of plants. May regulate the synthesis of sucrose and therefore play a major role as a limiting factor in the export of photoassimilates out of the leaf. Plays a role for sucrose availability that is essential for plant growth and fiber elongation. This Oryza sativa subsp. japonica (Rice) protein is Probable sucrose-phosphate synthase 5 (SPS5).